The chain runs to 117 residues: Acrylate reductase cytochrome subunit (117 aa).

An N-terminal signal peptide occupies residues 1–22 (MKMYKLMLGLVLAGLVSLSAQA). Heme c-binding residues include H29, C37, C40, H41, C54, C57, H58, H79, H83, C90, C93, H94, H97, C104, C107, and H108.

In terms of assembly, the ArdAB flavocytochrome c is composed of a FAD-containing subunit (ArdA) and a heme c-containing subunit (ArdB). Requires heme c as cofactor.

Its subcellular location is the periplasm. Methacrylate acts as a competitive inhibitor of the acrylate reductase activity and suppresses the reductase activity in dose-dependent manner. In terms of biological role, heme c-containing subunit of the ArdAB flavocytochrome c, which catalyzes the reduction of acrylate to propanoate and supports dimethylsulfoniopropionate-dependent anaerobic respiration. In vitro, can use the artificial electron donor methyl viologen. The natural electron donor is probably a low-potential cytochrome c. Also shows weak activity toward methacrylate in vitro (at a 22-fold lower rate) but cannot use other tested 2-enoates, including crotonic, fumaric, sorbic, urocanic, cinnamic, p-coumaric, caffeic or ferulic acids. The protein catalyzes a unidirectional reaction and cannot oxidize propanoate with phenazine metasulfate and dichlorophenolindophenol as electron acceptors. The sequence is that of Acrylate reductase cytochrome subunit from Shewanella woodyi (strain ATCC 51908 / MS32).